We begin with the raw amino-acid sequence, 377 residues long: Succinyl-diaminopimelate desuccinylase (377 aa).

A Zn(2+)-binding site is contributed by histidine 66. Residue aspartate 68 is part of the active site. Aspartate 99 serves as a coordination point for Zn(2+). The active-site Proton acceptor is the glutamate 133. Zn(2+) contacts are provided by glutamate 134, glutamate 163, and histidine 349.

It belongs to the peptidase M20A family. DapE subfamily. Homodimer. Zn(2+) serves as cofactor. Requires Co(2+) as cofactor.

It catalyses the reaction N-succinyl-(2S,6S)-2,6-diaminopimelate + H2O = (2S,6S)-2,6-diaminopimelate + succinate. It functions in the pathway amino-acid biosynthesis; L-lysine biosynthesis via DAP pathway; LL-2,6-diaminopimelate from (S)-tetrahydrodipicolinate (succinylase route): step 3/3. Functionally, catalyzes the hydrolysis of N-succinyl-L,L-diaminopimelic acid (SDAP), forming succinate and LL-2,6-diaminopimelate (DAP), an intermediate involved in the bacterial biosynthesis of lysine and meso-diaminopimelic acid, an essential component of bacterial cell walls. This Legionella pneumophila (strain Corby) protein is Succinyl-diaminopimelate desuccinylase.